The following is a 314-amino-acid chain: ATP synthase gamma chain (314 aa).

It belongs to the ATPase gamma chain family. In terms of assembly, F-type ATPases have 2 components, CF(1) - the catalytic core - and CF(0) - the membrane proton channel. CF(1) has five subunits: alpha(3), beta(3), gamma(1), delta(1), epsilon(1). CF(0) has three main subunits: a, b and c.

The protein resides in the cellular thylakoid membrane. Produces ATP from ADP in the presence of a proton gradient across the membrane. The gamma chain is believed to be important in regulating ATPase activity and the flow of protons through the CF(0) complex. The sequence is that of ATP synthase gamma chain from Crocosphaera subtropica (strain ATCC 51142 / BH68) (Cyanothece sp. (strain ATCC 51142)).